The primary structure comprises 333 residues: DNA-directed RNA polymerase subunit alpha (333 aa).

The segment at 1 to 233 (MVREKIRVST…DLFIPFLHAE (233 aa)) is alpha N-terminal domain (alpha-NTD). Residues 269–333 (IALKYIFIDQ…DILEMEKNFA (65 aa)) form an alpha C-terminal domain (alpha-CTD) region.

It belongs to the RNA polymerase alpha chain family. In plastids the minimal PEP RNA polymerase catalytic core is composed of four subunits: alpha, beta, beta', and beta''. When a (nuclear-encoded) sigma factor is associated with the core the holoenzyme is formed, which can initiate transcription.

It localises to the plastid. Its subcellular location is the chloroplast. The enzyme catalyses RNA(n) + a ribonucleoside 5'-triphosphate = RNA(n+1) + diphosphate. DNA-dependent RNA polymerase catalyzes the transcription of DNA into RNA using the four ribonucleoside triphosphates as substrates. This chain is DNA-directed RNA polymerase subunit alpha, found in Cucumis sativus (Cucumber).